The following is a 226-amino-acid chain: Reticulon-like protein B16 (226 aa).

One can recognise a Reticulon domain in the interval 41-224 (AADLLLWRRR…RLSWSLSKDK (184 aa)). 3 helical membrane-spanning segments follow: residues 54-74 (LGVIIISTVAWLIFEFSGLPF), 75-95 (LSVSSDVLLIVIMISFVHARV), and 149-169 (VVICLWLLSAIGSYISLCTLL).

The protein resides in the endoplasmic reticulum membrane. The protein is Reticulon-like protein B16 (RTNLB16) of Arabidopsis thaliana (Mouse-ear cress).